We begin with the raw amino-acid sequence, 621 residues long: Glucose 1,6-bisphosphate synthase (621 aa).

Residues arginine 73 and serine 175 each contribute to the alpha-D-glucose 1,6-bisphosphate site. Serine 175 (phosphoserine intermediate) is an active-site residue. Residues serine 175, aspartate 332, aspartate 334, and aspartate 336 each contribute to the Mg(2+) site. Serine 175 bears the Phosphoserine mark. Alpha-D-glucose 1,6-bisphosphate contacts are provided by aspartate 336, arginine 337, glutamate 433, serine 435, and lysine 447.

Belongs to the phosphohexose mutase family. As to expression, expressed at highest levels in the brain and testis, at intermediate levels in thymus, spleen, lung and skeletal muscle, and at lowest levels in kidney, liver and heart.

It is found in the cytoplasm. The protein localises to the cytosol. The enzyme catalyses (2R)-3-phospho-glyceroyl phosphate + alpha-D-glucose 1-phosphate = alpha-D-glucose 1,6-bisphosphate + (2R)-3-phosphoglycerate + H(+). The catalysed reaction is alpha-D-glucose 6-phosphate + (2R)-3-phospho-glyceroyl phosphate = alpha-D-glucose 1,6-bisphosphate + (2R)-3-phosphoglycerate + H(+). It carries out the reaction (2R)-3-phospho-glyceroyl phosphate + alpha-D-ribose 1-phosphate = alpha-D-ribose 1,5-bisphosphate + (2R)-3-phosphoglycerate + H(+). It catalyses the reaction 2-deoxy-alpha-D-ribose 1-phosphate + (2R)-3-phospho-glyceroyl phosphate = 2-deoxy-alpha-D-ribose 1,5-bisphosphate + (2R)-3-phosphoglycerate + H(+). The enzyme catalyses (2R)-3-phospho-glyceroyl phosphate + alpha-D-mannose 1-phosphate = alpha-D-mannose 1,6-bisphosphate + (2R)-3-phosphoglycerate + H(+). Its function is as follows. Glucose 1,6-bisphosphate synthase using 1,3-bisphosphoglycerate as a phosphate donor and a series of 1-phosphate sugars, including glucose 1-phosphate, mannose 1-phosphate, ribose 1-phosphate and deoxyribose 1-phosphate, as acceptors. In vitro, also exhibits very low phosphopentomutase and phosphoglucomutase activity which are most probably not physiologically relevant. This is Glucose 1,6-bisphosphate synthase from Mus musculus (Mouse).